The sequence spans 265 residues: MQPDLHCRTLAAHTLKHFRALSPLTHCMTNDVVQTFTANTLLALGASPAMVIDPVEARPFAAIANALLINVGTLTASRADAMRAAVESAYDAKTPWTLDPVAVGALEFRRRFCLDLLSLRPAAIRGNASEILALSGMALGGRGVDTTEAALAALPAAQALARQIDCIVVVTGEIDYVTNGQRTLSIPGGDPLMTRIVGTGCALSAVVAASCALPGAALDNVASACCWMKLAGQAAAERSEGPGSFIPAFLDALYHLDVEAANATN.

Residue M50 coordinates substrate. Residues R125 and T171 each coordinate ATP. G198 provides a ligand contact to substrate.

Belongs to the Thz kinase family. The cofactor is Mg(2+).

The enzyme catalyses 5-(2-hydroxyethyl)-4-methylthiazole + ATP = 4-methyl-5-(2-phosphooxyethyl)-thiazole + ADP + H(+). Its pathway is cofactor biosynthesis; thiamine diphosphate biosynthesis; 4-methyl-5-(2-phosphoethyl)-thiazole from 5-(2-hydroxyethyl)-4-methylthiazole: step 1/1. Its function is as follows. Catalyzes the phosphorylation of the hydroxyl group of 4-methyl-5-beta-hydroxyethylthiazole (THZ). The chain is Hydroxyethylthiazole kinase from Salmonella typhimurium (strain LT2 / SGSC1412 / ATCC 700720).